The sequence spans 357 residues: DNA integrity scanning protein DisA (357 aa).

The region spanning 8–146 (VKSIINILQL…GNLRYTLKDI (139 aa)) is the DAC domain. Residues G75, L93, and 106–110 (MRHRT) contribute to the ATP site.

It belongs to the DisA family. Homooctamer. Requires Mg(2+) as cofactor.

It catalyses the reaction 2 ATP = 3',3'-c-di-AMP + 2 diphosphate. Functionally, participates in a DNA-damage check-point that is active prior to asymmetric division when DNA is damaged. DisA forms globular foci that rapidly scan along the chromosomes during sporulation, searching for lesions. When a lesion is present, DisA pauses at the lesion site. This triggers a cellular response that culminates in a temporary block in sporulation initiation. Also has diadenylate cyclase activity, catalyzing the condensation of 2 ATP molecules into cyclic di-AMP (c-di-AMP). c-di-AMP acts as a signaling molecule that couples DNA integrity with progression of sporulation. The rise in c-di-AMP level generated by DisA while scanning the chromosome, operates as a positive signal that advances sporulation; upon encountering a lesion, the DisA focus arrests at the damaged site and halts c-di-AMP synthesis. In Bacillus cereus (strain B4264), this protein is DNA integrity scanning protein DisA.